Here is a 335-residue protein sequence, read N- to C-terminus: Methionine import ATP-binding protein MetN 1 (335 aa).

One can recognise an ABC transporter domain in the interval Ile-2–Val-242. Position 38–45 (Gly-38–Ser-45) interacts with ATP.

It belongs to the ABC transporter superfamily. Methionine importer (TC 3.A.1.24) family. As to quaternary structure, the complex is composed of two ATP-binding proteins (MetN), two transmembrane proteins (MetI) and a solute-binding protein (MetQ).

It is found in the cell inner membrane. The enzyme catalyses L-methionine(out) + ATP + H2O = L-methionine(in) + ADP + phosphate + H(+). It carries out the reaction D-methionine(out) + ATP + H2O = D-methionine(in) + ADP + phosphate + H(+). Its function is as follows. Part of the ABC transporter complex MetNIQ involved in methionine import. Responsible for energy coupling to the transport system. This chain is Methionine import ATP-binding protein MetN 1, found in Pseudomonas syringae pv. syringae (strain B728a).